A 490-amino-acid polypeptide reads, in one-letter code: ATP synthase subunit beta (490 aa).

Position 173 to 180 (173 to 180) interacts with ATP; the sequence is GGAGVGKT.

Belongs to the ATPase alpha/beta chains family. In terms of assembly, F-type ATPases have 2 components, CF(1) - the catalytic core - and CF(0) - the membrane proton channel. CF(1) has five subunits: alpha(3), beta(3), gamma(1), delta(1), epsilon(1). CF(0) has three main subunits: a(1), b(2) and c(9-12). The alpha and beta chains form an alternating ring which encloses part of the gamma chain. CF(1) is attached to CF(0) by a central stalk formed by the gamma and epsilon chains, while a peripheral stalk is formed by the delta and b chains.

It localises to the cell membrane. The enzyme catalyses ATP + H2O + 4 H(+)(in) = ADP + phosphate + 5 H(+)(out). In terms of biological role, produces ATP from ADP in the presence of a proton gradient across the membrane. The catalytic sites are hosted primarily by the beta subunits. The protein is ATP synthase subunit beta of Bifidobacterium longum (strain DJO10A).